The following is a 142-amino-acid chain: Large ribosomal subunit protein uL13 (142 aa).

Belongs to the universal ribosomal protein uL13 family. In terms of assembly, part of the 50S ribosomal subunit.

Functionally, this protein is one of the early assembly proteins of the 50S ribosomal subunit, although it is not seen to bind rRNA by itself. It is important during the early stages of 50S assembly. This Pseudoalteromonas atlantica (strain T6c / ATCC BAA-1087) protein is Large ribosomal subunit protein uL13.